Here is a 64-residue protein sequence, read N- to C-terminus: MKTTELRAKDVAGIEAEIKALQKAHFSLRMQKATQQLSNTSTLRTTRRAIARAKTILAQKQAAH.

It belongs to the universal ribosomal protein uL29 family.

The sequence is that of Large ribosomal subunit protein uL29 from Verminephrobacter eiseniae (strain EF01-2).